We begin with the raw amino-acid sequence, 347 residues long: GMP reductase (347 aa).

An NADP(+)-binding site is contributed by 108 to 131 (NDFLKLQRILALSPALRFICVDVA). Residues glycine 181 and glycine 183 each contribute to the K(+) site. The active-site Thioimidate intermediate is the cysteine 186. NADP(+) is bound at residue 216–239 (IVGDGGCTCPGDVAKAFGGGADFV).

The protein belongs to the IMPDH/GMPR family. GuaC type 1 subfamily. In terms of assembly, homotetramer.

The catalysed reaction is IMP + NH4(+) + NADP(+) = GMP + NADPH + 2 H(+). Functionally, catalyzes the irreversible NADPH-dependent deamination of GMP to IMP. It functions in the conversion of nucleobase, nucleoside and nucleotide derivatives of G to A nucleotides, and in maintaining the intracellular balance of A and G nucleotides. This Tolumonas auensis (strain DSM 9187 / NBRC 110442 / TA 4) protein is GMP reductase.